The chain runs to 506 residues: UPF0522 protein A (506 aa).

An N-terminal signal peptide occupies residues 1-18; it reads MIKSLLLLISIIIGIVIS. N-linked (GlcNAc...) asparagine glycans are attached at residues N145, N155, N330, N366, N418, and N427.

This sequence belongs to the UPF0522 family.

It localises to the secreted. The sequence is that of UPF0522 protein A from Dictyostelium discoideum (Social amoeba).